A 471-amino-acid chain; its full sequence is Ribosomal protein uS12 methylthiotransferase RimO (471 aa).

The MTTase N-terminal domain maps to 2–122; it reads IKVSLISLGC…VAPIIQEIYA (121 aa). Residues C11, C47, C84, C166, C170, and C173 each contribute to the [4Fe-4S] cluster site. The 244-residue stretch at 152–395 folds into the Radical SAM core domain; the sequence is LTPKHFAYVK…MALQKQIAAD (244 aa). In terms of domain architecture, TRAM spans 398-458; it reads KTYVGRTLRV…DYDLLALPPG (61 aa).

It belongs to the methylthiotransferase family. RimO subfamily. [4Fe-4S] cluster serves as cofactor.

Its subcellular location is the cytoplasm. It carries out the reaction L-aspartate(89)-[ribosomal protein uS12]-hydrogen + (sulfur carrier)-SH + AH2 + 2 S-adenosyl-L-methionine = 3-methylsulfanyl-L-aspartate(89)-[ribosomal protein uS12]-hydrogen + (sulfur carrier)-H + 5'-deoxyadenosine + L-methionine + A + S-adenosyl-L-homocysteine + 2 H(+). Functionally, catalyzes the methylthiolation of an aspartic acid residue of ribosomal protein uS12. The protein is Ribosomal protein uS12 methylthiotransferase RimO of Opitutus terrae (strain DSM 11246 / JCM 15787 / PB90-1).